Reading from the N-terminus, the 111-residue chain is Antitoxin PrlF (111 aa).

In terms of domain architecture, SpoVT-AbrB spans 12–59 (TTESKVTIRGQTTIPAPVREALKLKPGLDSIHYEILPGGQVFMCRLGD).

In terms of assembly, homodimer; forms a complex with YhaV with stoichiometry PrlF(2)-YhaV(4), possibly as a YhaV(2)-PrlF(2)-YhaV(2) complex like the MazFE complex.

The protein localises to the cytoplasm. Its function is as follows. Antitoxin component of a type II toxin-antitoxin (TA) system. Labile antitoxin that binds to the YhaV toxin and neutralizes its ribonuclease activity. Also acts as a transcription factor. The YhaV/PrlF complex binds the prlF-yhaV operon, probably negatively regulating its expression. The chain is Antitoxin PrlF (prlF) from Escherichia coli O6:H1 (strain CFT073 / ATCC 700928 / UPEC).